Here is a 675-residue protein sequence, read N- to C-terminus: Vacuolar protein sorting-associated protein 5 (675 aa).

3 disordered regions span residues 1-26 (MDYE…QSLV), 65-84 (EWKD…EHDN), and 165-219 (RAQR…RREN). The span at 168-180 (RNSKRNHSLKAKR) shows a compositional bias: basic residues. A compositionally biased stretch (basic and acidic residues) spans 195–204 (PLKKAEKENE). A PX domain is found at 279 to 394 (VAFKVEVKDP…LFLTSDDFSS (116 aa)). Positions 320, 346, and 360 each coordinate a 1,2-diacyl-sn-glycero-3-phospho-(1D-myo-inositol-3-phosphate).

It belongs to the sorting nexin family. In terms of assembly, component of the retromer complex which consists of VPS29, VPS26, VPS35, VPS5 and VPS17. Component of a retromer subcomplex consisting of VPSD5 and VPS17. Post-translationally, phosphorylated on serine residue(s).

Its subcellular location is the cytoplasm. It is found in the golgi apparatus membrane. The protein localises to the endosome membrane. Plays a role in vesicular protein sorting. Required for retention of late Golgi membrane proteins and vacuolar biogenesis. Component of the membrane-associated retromer complex which is essential in endosome-to-Golgi retrograde transport. The VPS5-VPS17 subcomplex may assemble onto the membrane to promote vesicle formation. This is Vacuolar protein sorting-associated protein 5 (VPS5) from Saccharomyces cerevisiae (strain ATCC 204508 / S288c) (Baker's yeast).